Reading from the N-terminus, the 390-residue chain is Elongation factor Tu 2 (390 aa).

One can recognise a tr-type G domain in the interval 10–203 (KPHLNIGTMG…AVDTYVPMPE (194 aa)). The tract at residues 19-26 (GHVDHGKT) is G1. Residue 19 to 26 (GHVDHGKT) participates in GTP binding. Position 26 (Thr26) interacts with Mg(2+). The G2 stretch occupies residues 60–64 (GITIN). A G3 region spans residues 81-84 (DMPG). Residues 81–85 (DMPGH) and 136–139 (NKAD) each bind GTP. A G4 region spans residues 136–139 (NKAD). The interval 173–175 (SGL) is G5.

Belongs to the TRAFAC class translation factor GTPase superfamily. Classic translation factor GTPase family. EF-Tu/EF-1A subfamily. Monomer.

It is found in the cytoplasm. The enzyme catalyses GTP + H2O = GDP + phosphate + H(+). Functionally, GTP hydrolase that promotes the GTP-dependent binding of aminoacyl-tRNA to the A-site of ribosomes during protein biosynthesis. This is Elongation factor Tu 2 from Streptomyces avermitilis (strain ATCC 31267 / DSM 46492 / JCM 5070 / NBRC 14893 / NCIMB 12804 / NRRL 8165 / MA-4680).